Here is a 303-residue protein sequence, read N- to C-terminus: Putative S-adenosyl-L-methionine-dependent methyltransferase Mb1931c (303 aa).

S-adenosyl-L-methionine is bound by residues D129 and 158 to 159; that span reads DL.

This sequence belongs to the UPF0677 family.

Exhibits S-adenosyl-L-methionine-dependent methyltransferase activity. This chain is Putative S-adenosyl-L-methionine-dependent methyltransferase Mb1931c, found in Mycobacterium bovis (strain ATCC BAA-935 / AF2122/97).